The primary structure comprises 365 residues: MELDFGHFDERDKASRNMRGSRMNGLPSPTHSAHCSFYRTRTLQALSNEKKAKKVRFYRNGDRYFKGIVYAVSSDRFRSFDALLADLTRSLSDNINLLQGVRYIYTIDGSRKIGSMDELEEGESYVCSSDNFFKKVEYTKNVNPNWSVNVKTSANMKAPQSLASSNSAQARENKDFVRPKLVTIIRSGVKPRKAVRVLLNKKTAHSFEQVLTDITEAIKLETGVVKKLYTLDGKQVTCLHDFFGDDDVFIACGPEKFRYAQDDFSLDENECRVMKGNPSATAGPKASPTPQKTSAKSPGPMRRSKSPADSGNDQDANGTSSSQLSTPKSKQSPISTPTSPGSLRKHKDLYLPLSLDDSDSLGDSM.

Position 28 is a phosphoserine; by CDK5 (Ser-28). Phosphoserine; by MARK1 and PKA is present on Ser-47. 2 consecutive Doublecortin domains span residues 53-139 (KKVR…VEYT) and 180-263 (KLVT…AQDD). Position 70 is a phosphotyrosine; by ABL (Tyr-70). Ser-74 is subject to Phosphoserine; by PKC. A Phosphoserine; by CK2 modification is found at Ser-90. Phosphoserine; by PKC is present on Ser-110. Ser-115 bears the Phosphoserine; by CK2, MARK1 and PKA mark. At Ser-265 the chain carries Phosphoserine; by CK2. Residues 275–365 (KGNPSATAGP…DDSDSLGDSM (91 aa)) form a disordered region. A Phosphoserine; by CDK5 modification is found at Ser-287. Phosphothreonine; by CDK5 is present on Thr-289. Residue Ser-294 is modified to Phosphoserine; by PKC. Ser-297 carries the phosphoserine; by CDK5 modification. The residue at position 306 (Ser-306) is a Phosphoserine; by CK2. At Ser-306 the chain carries Phosphoserine; by DYRK2. The span at 307-341 (PADSGNDQDANGTSSSQLSTPKSKQSPISTPTSPG) shows a compositional bias: polar residues. Thr-326 carries the phosphothreonine; by CDK5 modification. Thr-326 bears the Phosphothreonine; by PKC and MAPK mark. At Ser-332 the chain carries Phosphoserine; by CDK5. Ser-332 carries the post-translational modification Phosphoserine; by MAPK. Residue Thr-336 is modified to Phosphothreonine; by MAPK. Ser-339 carries the phosphoserine; by CDK5 modification. At Ser-339 the chain carries Phosphoserine; by MAPK. A Phosphoserine; by PKC modification is found at Ser-342. Phosphoserine; by CK2 occurs at positions 354 and 360. Residues 356-365 (DDSDSLGDSM) show a composition bias toward acidic residues.

In terms of assembly, interacts with tubulin. Interacts with USP9X. Post-translationally, phosphorylation by MARK1, MARK2 and PKA regulates its ability to bind microtubules. Phosphorylation at Ser-265 and Ser-297 seems to occur only in neonatal brain, the levels falling precipitously by postnatal day 21. In terms of processing, ubiquitinated by MDM2, leading to its degradation by the proteasome. Ubiquitinated by MDM2 and subsequent degradation leads to reduce the dendritic spine density of olfactory bulb granule cells.

The protein localises to the cytoplasm. Its subcellular location is the cell projection. The protein resides in the neuron projection. Its function is as follows. Microtubule-associated protein required for initial steps of neuronal dispersion and cortex lamination during cerebral cortex development. May act by competing with the putative neuronal protein kinase DCLK1 in binding to a target protein. May in that way participate in a signaling pathway that is crucial for neuronal interaction before and during migration, possibly as part of a calcium ion-dependent signal transduction pathway. May participate along with PAFAH1B1/LIS-1 in a distinct overlapping signaling pathway that promotes neuronal migration. This is Neuronal migration protein doublecortin (Dcx) from Rattus norvegicus (Rat).